The primary structure comprises 1577 residues: Pentafunctional AROM polypeptide (1577 aa).

Residues 1 to 384 (MSMKMADPTK…YEPKASVVSN (384 aa)) are 3-dehydroquinate synthase. Residues 48 to 50 (DTN), 85 to 88 (ENSK), 116 to 118 (GGV), and D121 each bind NAD(+). Residue R132 participates in 7-phospho-2-dehydro-3-deoxy-D-arabino-heptonate binding. An NAD(+)-binding site is contributed by 141 to 142 (TT). Residues D148 and K154 each coordinate 7-phospho-2-dehydro-3-deoxy-D-arabino-heptonate. K163 contributes to the NAD(+) binding site. N164 provides a ligand contact to 7-phospho-2-dehydro-3-deoxy-D-arabino-heptonate. NAD(+)-binding positions include 181–184 (FIDT) and N192. E196 is a Zn(2+) binding site. 7-phospho-2-dehydro-3-deoxy-D-arabino-heptonate-binding positions include 196–199 (EVIK) and K250. The active-site Proton acceptor; for 3-dehydroquinate synthase activity is the E260. Residues 264–268 (RNLLN) and H271 contribute to the 7-phospho-2-dehydro-3-deoxy-D-arabino-heptonate site. H271 is a binding site for Zn(2+). The active-site Proton acceptor; for 3-dehydroquinate synthase activity is the H275. Residues H287 and K356 each contribute to the 7-phospho-2-dehydro-3-deoxy-D-arabino-heptonate site. H287 provides a ligand contact to Zn(2+). Positions 397–842 (VIPGVPKSLN…WDALKQKFGV (446 aa)) are EPSP synthase. C824 serves as the catalytic For EPSP synthase activity. Positions 864-1056 (NASVIIIGMR…RKKRLSFFVS (193 aa)) are shikimate kinase. Residue 871–878 (GMRGAGKT) participates in ATP binding. The segment at 1057 to 1277 (LTLPDLRDTG…AAPGQLSAAE (221 aa)) is 3-dehydroquinase. Residue H1180 is the Proton acceptor; for 3-dehydroquinate dehydratase activity of the active site. K1208 acts as the Schiff-base intermediate with substrate; for 3-dehydroquinate dehydratase activity in catalysis. A shikimate dehydrogenase region spans residues 1290–1577 (AKKFAIFGKP…RNAVLGTNEK (288 aa)).

In the N-terminal section; belongs to the sugar phosphate cyclases superfamily. Dehydroquinate synthase family. This sequence in the 2nd section; belongs to the EPSP synthase family. The protein in the 3rd section; belongs to the shikimate kinase family. It in the 4th section; belongs to the type-I 3-dehydroquinase family. In the C-terminal section; belongs to the shikimate dehydrogenase family. In terms of assembly, homodimer. It depends on Zn(2+) as a cofactor.

Its subcellular location is the cytoplasm. It catalyses the reaction 7-phospho-2-dehydro-3-deoxy-D-arabino-heptonate = 3-dehydroquinate + phosphate. It carries out the reaction 3-dehydroquinate = 3-dehydroshikimate + H2O. The enzyme catalyses shikimate + NADP(+) = 3-dehydroshikimate + NADPH + H(+). The catalysed reaction is shikimate + ATP = 3-phosphoshikimate + ADP + H(+). It catalyses the reaction 3-phosphoshikimate + phosphoenolpyruvate = 5-O-(1-carboxyvinyl)-3-phosphoshikimate + phosphate. It participates in metabolic intermediate biosynthesis; chorismate biosynthesis; chorismate from D-erythrose 4-phosphate and phosphoenolpyruvate: step 2/7. Its pathway is metabolic intermediate biosynthesis; chorismate biosynthesis; chorismate from D-erythrose 4-phosphate and phosphoenolpyruvate: step 3/7. The protein operates within metabolic intermediate biosynthesis; chorismate biosynthesis; chorismate from D-erythrose 4-phosphate and phosphoenolpyruvate: step 4/7. It functions in the pathway metabolic intermediate biosynthesis; chorismate biosynthesis; chorismate from D-erythrose 4-phosphate and phosphoenolpyruvate: step 5/7. It participates in metabolic intermediate biosynthesis; chorismate biosynthesis; chorismate from D-erythrose 4-phosphate and phosphoenolpyruvate: step 6/7. In terms of biological role, the AROM polypeptide catalyzes 5 consecutive enzymatic reactions in prechorismate polyaromatic amino acid biosynthesis. In Talaromyces stipitatus (strain ATCC 10500 / CBS 375.48 / QM 6759 / NRRL 1006) (Penicillium stipitatum), this protein is Pentafunctional AROM polypeptide.